The sequence spans 389 residues: Na(+)/H(+) antiporter NhaA (389 aa).

11 consecutive transmembrane segments (helical) span residues 14-34, 59-79, 95-115, 124-144, 154-174, 177-197, 213-233, 261-281, 290-310, 328-348, and 363-383; these read AGGI…NSPL, LLLW…GLEV, SLPS…YLLF, AGWA…MALL, VFLL…IALF, SDLS…LVGL, LILW…GVII, FLIL…NMSL, IGIA…FSFI, IAPV…IASL, and LGTL…LSKV.

This sequence belongs to the NhaA Na(+)/H(+) (TC 2.A.33) antiporter family.

The protein localises to the cell inner membrane. It carries out the reaction Na(+)(in) + 2 H(+)(out) = Na(+)(out) + 2 H(+)(in). In terms of biological role, na(+)/H(+) antiporter that extrudes sodium in exchange for external protons. The chain is Na(+)/H(+) antiporter NhaA from Shewanella sp. (strain W3-18-1).